The sequence spans 265 residues: Mlc titration factor A (265 aa).

His-111, His-148, His-152, and Glu-211 together coordinate Zn(2+).

Belongs to the MtfA family. As to quaternary structure, interacts with Mlc. Zn(2+) serves as cofactor.

It localises to the cytoplasm. In terms of biological role, involved in the modulation of the activity of the glucose-phosphotransferase system (glucose-PTS). Interacts with the transcriptional repressor Mlc, preventing its interaction with DNA and leading to the modulation of expression of genes regulated by Mlc, including ptsG, which encodes the PTS system glucose-specific EIICB component. Its function is as follows. Shows zinc-dependent metallopeptidase activity. This Escherichia coli (strain SMS-3-5 / SECEC) protein is Mlc titration factor A.